The primary structure comprises 693 residues: MIAPLLCILSYNFNTFAILNVYSKLTMFCTTNSLPMDLLLKQGSLKQEVESFCYQIVSESNDQKVGILQSEDKQLQPSVSKKSEGELSRVKFISNSNKITFSKKPKRRKYDESYLSFGFTYFGNRDAPHAQCVLCKKILSNSSLAPSKLRRHLETKHAAYKDKDISFFKQHLDSPENNKPPTPKIVNTDNESATEASYNVSYHIALSGEAHTIGELLIKPCAKDVVMRMFDEQYSKKIDAVQLSNSTVARRIKDLAADIEEELVCRLKICDGFSLQLDESADVSGLAVLLVFVRYRFNKSIEEDLLLCESLQSNATGEEIFNCINSFMQKHEIEWEKCVDVCSDASRAVDGKIAEAVTLIKYVAPESTSSHCLLYRHALAVKIMPTSLKNVLDQAVQIINYIKARPHQSRLLKILCEEMGAQHTALLLNTEVRWLSRGKVLVRLFELRRELLVFMDSAFRLSDCLTNSSWLLRLAYLADIFTKLNEVNLSMQGKNVTVFTVFDKMSSLLRKLEFWASSVEEENFDCFPTLSDFLTEINSTVDKDICSAIVQHLRGLRATLLKYFPVTNDNNAWVRNPFTVTVKPASLVARDYESLIDLTSDSQVKQNFSELSLNDFWSSLIQEYPSIARRAVRVLLPFATMHLCETGFSYYAATKTKYRKRLDAAPHMRIRLSNITPNIKRICDKKTQKHCSH.

A BED-type zinc finger spans residues 108–164; that stretch reads RKYDESYLSFGFTYFGNRDAPHAQCVLCKKILSNSSLAPSKLRRHLETKHAAYKDKD. Positions 132, 135, 152, and 157 each coordinate Zn(2+).

The protein is Zinc finger BED domain-containing protein 5 (ZBED5) of Homo sapiens (Human).